We begin with the raw amino-acid sequence, 178 residues long: ATP-dependent protease subunit HslV (178 aa).

T7 is an active-site residue. Residues G162, C165, and T168 each contribute to the Na(+) site.

This sequence belongs to the peptidase T1B family. HslV subfamily. As to quaternary structure, a double ring-shaped homohexamer of HslV is capped on each side by a ring-shaped HslU homohexamer. The assembly of the HslU/HslV complex is dependent on binding of ATP.

It is found in the cytoplasm. It catalyses the reaction ATP-dependent cleavage of peptide bonds with broad specificity.. Its activity is regulated as follows. Allosterically activated by HslU binding. Its function is as follows. Protease subunit of a proteasome-like degradation complex believed to be a general protein degrading machinery. This chain is ATP-dependent protease subunit HslV, found in Paraburkholderia xenovorans (strain LB400).